A 509-amino-acid chain; its full sequence is Ribonuclease Y (509 aa).

A helical membrane pass occupies residues 3–23 (IIFSSIFAGFILGFLIRVFLG). A KH domain is found at 197–257 (TVASVELPND…IRKELAKRTL (61 aa)). The HD domain occupies 323-418 (VLSHSKETAI…VQIADAISAS (96 aa)).

This sequence belongs to the RNase Y family.

It is found in the cell membrane. Functionally, endoribonuclease that initiates mRNA decay. This chain is Ribonuclease Y, found in Borreliella afzelii (strain PKo) (Borrelia afzelii).